Consider the following 363-residue polypeptide: NAD(P)H-quinone oxidoreductase subunit 1, chloroplastic (363 aa).

8 consecutive transmembrane segments (helical) span residues 27–47 (LIPI…IVWL), 93–113 (WLFS…YLVV), 124–144 (LGVG…GLLM), 162–182 (AAQA…VALL), 200–220 (ILGW…IASL), 250–270 (FGLF…FVSV), 303–323 (ATLG…LSIL), and 343–363 (FLLP…LALL).

It belongs to the complex I subunit 1 family. In terms of assembly, NDH is composed of at least 16 different subunits, 5 of which are encoded in the nucleus.

It localises to the plastid. Its subcellular location is the chloroplast thylakoid membrane. It carries out the reaction a plastoquinone + NADH + (n+1) H(+)(in) = a plastoquinol + NAD(+) + n H(+)(out). It catalyses the reaction a plastoquinone + NADPH + (n+1) H(+)(in) = a plastoquinol + NADP(+) + n H(+)(out). Its function is as follows. NDH shuttles electrons from NAD(P)H:plastoquinone, via FMN and iron-sulfur (Fe-S) centers, to quinones in the photosynthetic chain and possibly in a chloroplast respiratory chain. The immediate electron acceptor for the enzyme in this species is believed to be plastoquinone. Couples the redox reaction to proton translocation, and thus conserves the redox energy in a proton gradient. In Chaetosphaeridium globosum (Charophycean green alga), this protein is NAD(P)H-quinone oxidoreductase subunit 1, chloroplastic.